A 182-amino-acid chain; its full sequence is Protein LURP-one-related 7 (182 aa).

Belongs to the LOR family.

Functionally, might be related to the phospholipid scramblase and tubby-like superfamily of membrane tethered transcription factors. This is Protein LURP-one-related 7 from Arabidopsis thaliana (Mouse-ear cress).